A 745-amino-acid chain; its full sequence is Dipeptidyl aminopeptidase 4 (745 aa).

Positions 1 to 22 (MRLALFALFALMTVATALPAHA) are cleaved as a signal peptide. Substrate-binding residues include glutamate 208 and glutamate 209. Catalysis depends on charge relay system residues serine 613, aspartate 689, and histidine 721.

This sequence belongs to the peptidase S9B family. Homodimer.

It localises to the cytoplasm. The protein localises to the periplasm. The catalysed reaction is Release of an N-terminal dipeptide, Xaa-Yaa-|-Zaa-, from a polypeptide, preferentially when Yaa is Pro, provided Zaa is neither Pro nor hydroxyproline.. With respect to regulation, completely inhibited by the serine protease inhibitor diisopropyl fluorophosphate (DFP) and moderately by N-tosyl-L-phenyl-alanyl chloromethyl ketone (TPCK). Somewhat inhibited by phenylmethanesulfonyl fluoride (PMSF). Activity is not affected by thiol- or metalloprotease inhibitors, such as iodoacetate (IAA), EDTA, N-tosyl-L-lysyl chloromethyl ketone (TLCK), o-phenanthlorine, N-ethylmaleimide (NEM) or dithiothreitol (DTT). In terms of biological role, catalyzes the sequential release of Tyr-Pro, Phe-Pro and Gly-Pro from the N-terminus of peptides and proteins. Is able to cleaves bioactive peptide beta-casomorphin. This Pseudoxanthomonas mexicana protein is Dipeptidyl aminopeptidase 4.